The following is a 184-amino-acid chain: Inorganic pyrophosphatase (184 aa).

3 residues coordinate substrate: lysine 19, arginine 33, and tyrosine 45. 3 residues coordinate Mg(2+): aspartate 55, aspartate 60, and aspartate 92. Substrate is bound at residue tyrosine 129.

This sequence belongs to the PPase family. Homohexamer. The cofactor is Mg(2+).

It is found in the cytoplasm. The catalysed reaction is diphosphate + H2O = 2 phosphate + H(+). In terms of biological role, catalyzes the hydrolysis of inorganic pyrophosphate (PPi) forming two phosphate ions. The sequence is that of Inorganic pyrophosphatase from Mycoplasma genitalium (strain ATCC 33530 / DSM 19775 / NCTC 10195 / G37) (Mycoplasmoides genitalium).